The following is a 58-amino-acid chain: Transactivator protein ORF121 (58 aa).

Functionally, stimulates the expression of 39k gene most probably by increasing IE1 expression. This Lepidoptera (butterflies and moths) protein is Transactivator protein ORF121 (AC121).